The sequence spans 184 residues: Peptide deformylase (184 aa).

Fe cation-binding residues include Cys-98 and His-140. Glu-141 is an active-site residue. His-144 serves as a coordination point for Fe cation.

Belongs to the polypeptide deformylase family. Requires Fe(2+) as cofactor.

It carries out the reaction N-terminal N-formyl-L-methionyl-[peptide] + H2O = N-terminal L-methionyl-[peptide] + formate. In terms of biological role, removes the formyl group from the N-terminal Met of newly synthesized proteins. Requires at least a dipeptide for an efficient rate of reaction. N-terminal L-methionine is a prerequisite for activity but the enzyme has broad specificity at other positions. This chain is Peptide deformylase, found in Bacteroides fragilis (strain ATCC 25285 / DSM 2151 / CCUG 4856 / JCM 11019 / LMG 10263 / NCTC 9343 / Onslow / VPI 2553 / EN-2).